Reading from the N-terminus, the 328-residue chain is GTPase Obg (328 aa).

Positions 1 to 159 (MNFIDEVKIY…MWVQLSLKLL (159 aa)) constitute an Obg domain. Residues 160–327 (SDVGLVGLPN…IIKLALQTIK (168 aa)) enclose the OBG-type G domain. GTP is bound by residues 166–173 (GLPNAGKS), 191–195 (FTTLV), 212–215 (DIPG), 279–282 (NKID), and 308–310 (STY). Residues Ser173 and Thr193 each coordinate Mg(2+).

This sequence belongs to the TRAFAC class OBG-HflX-like GTPase superfamily. OBG GTPase family. Monomer. Requires Mg(2+) as cofactor.

The protein resides in the cytoplasm. An essential GTPase which binds GTP, GDP and possibly (p)ppGpp with moderate affinity, with high nucleotide exchange rates and a fairly low GTP hydrolysis rate. Plays a role in control of the cell cycle, stress response, ribosome biogenesis and in those bacteria that undergo differentiation, in morphogenesis control. The protein is GTPase Obg of Rickettsia bellii (strain RML369-C).